The primary structure comprises 557 residues: CTP synthase (557 aa).

The tract at residues 1–272 (MARSKIVKHI…DSLVLKKLML (272 aa)) is amidoligase domain. S18 contributes to the CTP binding site. S18 lines the UTP pocket. 19-24 (SLGKGI) contributes to the ATP binding site. Y59 contributes to the L-glutamine binding site. D76 serves as a coordination point for ATP. 2 residues coordinate Mg(2+): D76 and E146. CTP-binding positions include 153–155 (DIE), 193–198 (KTKPTQ), and K229. UTP-binding positions include 193-198 (KTKPTQ) and K229. The Glutamine amidotransferase type-1 domain occupies 299–543 (EIGVCGKYTK…VAEAKKFRDE (245 aa)). G363 serves as a coordination point for L-glutamine. The Nucleophile; for glutamine hydrolysis role is filled by C390. Residues 391-394 (LGMQ), E414, and R471 contribute to the L-glutamine site. Active-site residues include H516 and E518.

The protein belongs to the CTP synthase family. As to quaternary structure, homotetramer.

The catalysed reaction is UTP + L-glutamine + ATP + H2O = CTP + L-glutamate + ADP + phosphate + 2 H(+). It catalyses the reaction L-glutamine + H2O = L-glutamate + NH4(+). It carries out the reaction UTP + NH4(+) + ATP = CTP + ADP + phosphate + 2 H(+). Its pathway is pyrimidine metabolism; CTP biosynthesis via de novo pathway; CTP from UDP: step 2/2. Its activity is regulated as follows. Allosterically activated by GTP, when glutamine is the substrate; GTP has no effect on the reaction when ammonia is the substrate. The allosteric effector GTP functions by stabilizing the protein conformation that binds the tetrahedral intermediate(s) formed during glutamine hydrolysis. Inhibited by the product CTP, via allosteric rather than competitive inhibition. Catalyzes the ATP-dependent amination of UTP to CTP with either L-glutamine or ammonia as the source of nitrogen. Regulates intracellular CTP levels through interactions with the four ribonucleotide triphosphates. The protein is CTP synthase of Chloroherpeton thalassium (strain ATCC 35110 / GB-78).